Here is a 564-residue protein sequence, read N- to C-terminus: MSEAGRAAAGPCPEVSPSRSQQLGGLLRCLRDSETRRLELERKLMEYKSSDAYLMKLKYVKLKKYLEEVNERQKRALLRNQTFLNEFNEFEAHVKASSSELIEKMVRYGREIKSGLSFQEGDLARGDKEEGCNEQMPQAARQAGIHAKTALSRSLHHPVPFFMGHCMSACSVQQETPQPAACPNSLTALQGDETDGHPTQADDDMQHANKLDEQGGKSYVPMGEKMSIRDSSLHSSLLNFTERKNSTELCSALPDGGSLQSRTADLASDTSVEEVVTREHLVASAKEVCEQPVLLASAPEPSITGPQCNLNTQQAASQDSSSSSTHPEENYSLQPPSCCAAEDEPLGSSVPEGFCSQDGSLKEDLEASEAAVLCQLPEAKSGQQWDVATLQASLNSHTAFLEEHEHLCTEELAAVLHSTLDLDEEAPGSQAPPLLREVLAEECGDGSSVQSNESSYSLPSIPNDSREVEQAKHVLWLDSMGKQGCVIGNNGSEAKESQEMCSERSSSSERSGDLSRPEFRKGAITAIKSKAFWGESDDSSSEAVDALRPQTRSPEADDFDDFYD.

Residues 1-21 (MSEAGRAAAGPCPEVSPSRSQ) are disordered. The stretch at 28 to 50 (RCLRDSETRRLELERKLMEYKSS) forms a coiled coil. Disordered stretches follow at residues 178–201 (QPAACPNSLTALQGDETDGHPTQA), 304–345 (TGPQ…EDEP), 442–465 (ECGDGSSVQSNESSYSLPSIPNDS), 487–519 (IGNNGSEAKESQEMCSERSSSSERSGDLSRPEF), and 531–564 (AFWGESDDSSSEAVDALRPQTRSPEADDFDDFYD). Residues 313 to 324 (QQAASQDSSSSS) are compositionally biased toward low complexity. Positions 447–463 (SSVQSNESSYSLPSIPN) are enriched in polar residues. Over residues 493 to 519 (EAKESQEMCSERSSSSERSGDLSRPEF) the composition is skewed to basic and acidic residues.

This sequence belongs to the kizuna family.

It localises to the cytoplasm. Its subcellular location is the cytoskeleton. The protein resides in the microtubule organizing center. It is found in the centrosome. The protein localises to the cilium basal body. Functionally, centrosomal protein required for establishing a robust mitotic centrosome architecture that can endure the forces that converge on the centrosomes during spindle formation. Required for stabilizing the expanded pericentriolar material around the centriole. This Gallus gallus (Chicken) protein is Centrosomal protein kizuna (KIZ).